A 412-amino-acid polypeptide reads, in one-letter code: Serine hydroxymethyltransferase (412 aa).

Residues L120 and 124–126 (GHL) each bind (6S)-5,6,7,8-tetrahydrofolate. Position 229 is an N6-(pyridoxal phosphate)lysine (K229). 352 to 354 (SPF) is a (6S)-5,6,7,8-tetrahydrofolate binding site.

The protein belongs to the SHMT family. In terms of assembly, homodimer. The cofactor is pyridoxal 5'-phosphate.

It localises to the cytoplasm. The enzyme catalyses (6R)-5,10-methylene-5,6,7,8-tetrahydrofolate + glycine + H2O = (6S)-5,6,7,8-tetrahydrofolate + L-serine. It participates in one-carbon metabolism; tetrahydrofolate interconversion. Its pathway is amino-acid biosynthesis; glycine biosynthesis; glycine from L-serine: step 1/1. In terms of biological role, catalyzes the reversible interconversion of serine and glycine with tetrahydrofolate (THF) serving as the one-carbon carrier. This reaction serves as the major source of one-carbon groups required for the biosynthesis of purines, thymidylate, methionine, and other important biomolecules. Also exhibits THF-independent aldolase activity toward beta-hydroxyamino acids, producing glycine and aldehydes, via a retro-aldol mechanism. This is Serine hydroxymethyltransferase from Acetivibrio thermocellus (strain ATCC 27405 / DSM 1237 / JCM 9322 / NBRC 103400 / NCIMB 10682 / NRRL B-4536 / VPI 7372) (Clostridium thermocellum).